A 333-amino-acid polypeptide reads, in one-letter code: tRNA uridine(34) hydroxylase (333 aa).

The Rhodanese domain occupies 123-217 (SDPEVILVDT…YLEEIKQEES (95 aa)). The active-site Cysteine persulfide intermediate is the C177.

Belongs to the TrhO family.

The enzyme catalyses uridine(34) in tRNA + AH2 + O2 = 5-hydroxyuridine(34) in tRNA + A + H2O. Its function is as follows. Catalyzes oxygen-dependent 5-hydroxyuridine (ho5U) modification at position 34 in tRNAs. This is tRNA uridine(34) hydroxylase from Shewanella sp. (strain MR-7).